The chain runs to 232 residues: Putative N-acetylmannosamine-6-phosphate 2-epimerase (232 aa).

It belongs to the NanE family.

It catalyses the reaction an N-acyl-D-glucosamine 6-phosphate = an N-acyl-D-mannosamine 6-phosphate. It participates in amino-sugar metabolism; N-acetylneuraminate degradation; D-fructose 6-phosphate from N-acetylneuraminate: step 3/5. Functionally, converts N-acetylmannosamine-6-phosphate (ManNAc-6-P) to N-acetylglucosamine-6-phosphate (GlcNAc-6-P). The polypeptide is Putative N-acetylmannosamine-6-phosphate 2-epimerase (Borreliella burgdorferi (strain ZS7) (Borrelia burgdorferi)).